We begin with the raw amino-acid sequence, 338 residues long: Large ribosomal subunit protein uL10 (338 aa).

The span at 298–308 (AAQQTQTQQST) shows a compositional bias: low complexity. Positions 298–338 (AAQQTQTQQSTAEEKKEEKKEEEKKGPSEEEIGSGLASLFG) are disordered. A compositionally biased stretch (basic and acidic residues) spans 309–325 (AEEKKEEKKEEEKKGPS).

This sequence belongs to the universal ribosomal protein uL10 family. As to quaternary structure, part of the 50S ribosomal subunit. Forms part of the ribosomal stalk which helps the ribosome interact with GTP-bound translation factors. Forms a heptameric L10(L12)2(L12)2(L12)2 complex, where L10 forms an elongated spine to which the L12 dimers bind in a sequential fashion.

Forms part of the ribosomal stalk, playing a central role in the interaction of the ribosome with GTP-bound translation factors. This is Large ribosomal subunit protein uL10 from Saccharolobus islandicus (strain M.16.27) (Sulfolobus islandicus).